Here is a 135-residue protein sequence, read N- to C-terminus: MAKNSRSQWIAKNLQRLLNVGLIALAAILVVFLIKETFHLGKVLFVNNQDASSYMLIEGIVIYFLYFEFIALIVKYFESGYHFPLRYFIYIGITAIIRLIIVDHENPIDTLIYSGSILLLVVTLYLANTERLKRE.

The next 4 helical transmembrane spans lie at 20-40 (VGLI…TFHL), 54-74 (YMLI…ALIV), 82-102 (HFPL…LIIV), and 107-127 (PIDT…LYLA).

The protein belongs to the PsiE family.

Its subcellular location is the cell inner membrane. In Yersinia enterocolitica serotype O:8 / biotype 1B (strain NCTC 13174 / 8081), this protein is Protein PsiE homolog.